A 273-amino-acid chain; its full sequence is Dermonecrotic toxin LhSicTox-alphaIA1iii (273 aa).

Residue His5 is part of the active site. Mg(2+) is bound by residues Glu25 and Asp27. Residue His41 is the Nucleophile of the active site. Intrachain disulfides connect Cys45–Cys51 and Cys47–Cys190. Asp85 is a Mg(2+) binding site.

This sequence belongs to the arthropod phospholipase D family. Class II subfamily. It depends on Mg(2+) as a cofactor. Expressed by the venom gland.

It localises to the secreted. It carries out the reaction an N-(acyl)-sphingosylphosphocholine = an N-(acyl)-sphingosyl-1,3-cyclic phosphate + choline. It catalyses the reaction an N-(acyl)-sphingosylphosphoethanolamine = an N-(acyl)-sphingosyl-1,3-cyclic phosphate + ethanolamine. The enzyme catalyses a 1-acyl-sn-glycero-3-phosphocholine = a 1-acyl-sn-glycero-2,3-cyclic phosphate + choline. The catalysed reaction is a 1-acyl-sn-glycero-3-phosphoethanolamine = a 1-acyl-sn-glycero-2,3-cyclic phosphate + ethanolamine. Its function is as follows. Dermonecrotic toxins cleave the phosphodiester linkage between the phosphate and headgroup of certain phospholipids (sphingolipid and lysolipid substrates), forming an alcohol (often choline) and a cyclic phosphate. This toxin acts on sphingomyelin (SM). It may also act on ceramide phosphoethanolamine (CPE), lysophosphatidylcholine (LPC) and lysophosphatidylethanolamine (LPE), but not on lysophosphatidylserine (LPS), and lysophosphatidylglycerol (LPG). It acts by transphosphatidylation, releasing exclusively cyclic phosphate products as second products. Induces dermonecrosis, hemolysis, increased vascular permeability, edema, inflammatory response, and platelet aggregation. The chain is Dermonecrotic toxin LhSicTox-alphaIA1iii from Loxosceles hirsuta (Recluse spider).